Here is a 117-residue protein sequence, read N- to C-terminus: Modulator protein MzrA (117 aa).

Residues M1–P9 are Cytoplasmic-facing. Residues T10 to S29 form a helical membrane-spanning segment. Residues S30 to S117 lie on the Periplasmic side of the membrane.

Belongs to the MzrA family. Interacts with EnvZ.

It localises to the cell inner membrane. Functionally, modulates the activity of the EnvZ/OmpR two-component regulatory system, probably by directly modulating EnvZ enzymatic activity and increasing stability of phosphorylated OmpR. The protein is Modulator protein MzrA of Dickeya zeae (strain Ech586) (Dickeya dadantii (strain Ech586)).